A 159-amino-acid chain; its full sequence is G-protein-signaling modulator 3 (159 aa).

Positions 1 to 54 (MEAERPQEEDGEQSLPQDDQGWPPVNATARPWRSAPPSPPPPGTRHTALGPRSG) are disordered. Phosphoserine is present on residues Ser-34, Ser-38, Ser-55, and Ser-58. Positions 34-43 (SAPPSPPPPG) are enriched in pro residues. Thr-61 carries the post-translational modification Phosphothreonine. Positions 61-83 (TELLLDLVAEAQSRRLEEQRATF) constitute a GoLoco 1 domain. The tract at residues 77 to 97 (EEQRATFHTPEAPPNLAPAPP) is disordered. Over residues 87–97 (EAPPNLAPAPP) the composition is skewed to pro residues. GoLoco domains are found at residues 103 to 125 (KEQL…RSDP) and 131 to 154 (GQEL…RSRP).

It is found in the cytoplasm. Functionally, interacts with subunit of G(i) alpha proteins and regulates the activation of G(i) alpha proteins. This is G-protein-signaling modulator 3 (Gpsm3) from Mus musculus (Mouse).